Here is a 491-residue protein sequence, read N- to C-terminus: Serine/threonine-protein kinase 3 (491 aa).

M1 is subject to N-acetylmethionine. A Phosphoserine; by PLK1 modification is found at S15. The 252-residue stretch at 27 to 278 folds into the Protein kinase domain; it reads FDVLEKLGEG…ATQLLQHPFI (252 aa). ATP is bound by residues 33–41 and K56; that span reads LGEGSYGSV. Position 117 is a phosphothreonine; by PKB/AKT1 (T117). D146 (proton acceptor) is an active-site residue. Mg(2+)-binding residues include N151 and D164. Phosphothreonine; by autocatalysis occurs at positions 174 and 180. The stretch at 287-328 forms a coiled coil; sequence LRDLITEAMEIKAKRHEEQQRELEEEEENSDEDELDSHTMVK. The tract at residues 301–327 is disordered; that stretch reads RHEEQQRELEEEEENSDEDELDSHTMV. A compositionally biased stretch (acidic residues) spans 309 to 321; that stretch reads LEEEEENSDEDEL. S316 is modified (phosphoserine). Residues T336 and T378 each carry the phosphothreonine; by autocatalysis modification. Residues 370 to 392 are disordered; that stretch reads EDEEEEDGTMKRNATSPQVQRPS. Residues 381-390 show a composition bias toward polar residues; it reads RNATSPQVQR. A Phosphothreonine; by PKB/AKT1 modification is found at T384. S385 and S444 each carry phosphoserine. Residues 437-484 enclose the SARAH domain; it reads FDFLKNLSLEELQMRLKALDPMMEREIEELRQRYTAKRQPILDAMDAK. Residues 442–475 adopt a coiled-coil conformation; it reads NLSLEELQMRLKALDPMMEREIEELRQRYTAKRQ.

This sequence belongs to the protein kinase superfamily. STE Ser/Thr protein kinase family. STE20 subfamily. In terms of assembly, homodimer; mediated via the coiled-coil region. Interacts with NORE1, which inhibits autoactivation. Interacts with and stabilizes SAV1. Interacts with RAF1, which prevents dimerization and phosphorylation. Interacts with RASSF1. Interacts (via SARAH domain) with isoform 1 of NEK2. Interacts with ESR1 only in the presence of SAV1. Interacts with PKB/AKT1. Forms a tripartite complex with MOBKL1B and STK38. Interacts with RASSF2 (via SARAH domain). Interacts with DLG5 (via PDZ domain 3). Interacts with LATS1; this interaction is inhibited in the presence of DLG5. Interacts with MARK3 in the presence of DLG5. Interacts with RASSF5; this interaction inhibits STK3 autoactivation through heterodimerization. Interacts (when phosphorylated) with SLMAP (via FHA domain); the interaction associates STK3 with the STRIPAK complex. Mg(2+) is required as a cofactor. Post-translationally, autophosphorylated on two residues Thr-174 and Thr-180, leading to activation. Phosphorylation at Thr-117 and Thr-384 by PKB/AKT1, leads to inhibition of its: cleavage, kinase activity, autophosphorylation at Thr-180, binding to RASSF1 and nuclear translocation, and increase in its binding to RAF1. Phosphorylated at Ser-15 by PLK1, leading to activation. When autophosphorylated at Thr-180, recruits STRIPAK complex and promotes PP2A-mediated dephosphorylation and inactivation of STK3. Proteolytically cleaved by caspase-3 during apoptosis. Proteolytic cleavage results in kinase activation and nuclear translocation of the truncated form (MST1/N). In terms of processing, ubiquitinated by TRIM69; leading to its redistribution to the perinuclear cytoskeleton, where it is phosphorylated by PLK1 and subsequently activated. Expressed at high levels in adult kidney, skeletal and placenta tissues and at very low levels in adult heart, lung and brain tissues.

It is found in the cytoplasm. It localises to the nucleus. The protein resides in the cytoskeleton. The protein localises to the microtubule organizing center. Its subcellular location is the centrosome. It catalyses the reaction L-seryl-[protein] + ATP = O-phospho-L-seryl-[protein] + ADP + H(+). The enzyme catalyses L-threonyl-[protein] + ATP = O-phospho-L-threonyl-[protein] + ADP + H(+). Inhibited by the C-terminal non-catalytic region. Activated by caspase-cleavage. Full activation also requires homodimerization and autophosphorylation of Thr-180, which are inhibited by the proto-oncogene product RAF1. Activated by RASSF1 which acts by preventing its dephosphorylation. When autophosphorylated at Thr-180, recruits STRIPAK complex and promotes PP2A-mediated dephosphorylation and inactivation of STK3. Functionally, stress-activated, pro-apoptotic kinase which, following caspase-cleavage, enters the nucleus and induces chromatin condensation followed by internucleosomal DNA fragmentation. Key component of the Hippo signaling pathway which plays a pivotal role in organ size control and tumor suppression by restricting proliferation and promoting apoptosis. The core of this pathway is composed of a kinase cascade wherein STK3/MST2 and STK4/MST1, in complex with its regulatory protein SAV1, phosphorylates and activates LATS1/2 in complex with its regulatory protein MOB1, which in turn phosphorylates and inactivates YAP1 oncoprotein and WWTR1/TAZ. Phosphorylation of YAP1 by LATS2 inhibits its translocation into the nucleus to regulate cellular genes important for cell proliferation, cell death, and cell migration. STK3/MST2 and STK4/MST1 are required to repress proliferation of mature hepatocytes, to prevent activation of facultative adult liver stem cells (oval cells), and to inhibit tumor formation. Phosphorylates NKX2-1. Phosphorylates NEK2 and plays a role in centrosome disjunction by regulating the localization of NEK2 to centrosome, and its ability to phosphorylate CROCC and CEP250. In conjunction with SAV1, activates the transcriptional activity of ESR1 through the modulation of its phosphorylation. Positively regulates RAF1 activation via suppression of the inhibitory phosphorylation of RAF1 on 'Ser-259'. Phosphorylates MOBKL1A and RASSF2. Phosphorylates MOBKL1B on 'Thr-74'. Acts cooperatively with MOBKL1B to activate STK38. The polypeptide is Serine/threonine-protein kinase 3 (Homo sapiens (Human)).